The following is a 334-amino-acid chain: Cathepsin L2 (334 aa).

Residues Met-1 to Ala-17 form the signal peptide. The propeptide at Val-18–Asp-113 is activation peptide. Intrachain disulfides connect Cys-135–Cys-178 and Cys-169–Cys-211. The active site involves Cys-138. N-linked (GlcNAc...) asparagine glycosylation is present at Asn-221. Cys-270 and Cys-323 form a disulfide bridge. His-277 is an active-site residue. N-linked (GlcNAc...) asparagine glycosylation is present at Asn-292. Asn-301 is a catalytic residue.

The protein belongs to the peptidase C1 family. Predominantly expressed in the thymus and testis. Also expressed in corneal epithelium, and to a lesser extent in conjunctival epithelium and skin.

The protein localises to the lysosome. The catalysed reaction is The recombinant enzyme hydrolyzes proteins (serum albumin, collagen) and synthetic substrates (Z-Phe-Arg-NHMec &gt; Z-Leu-Arg-NHMec &gt; Z-Val-Arg-NHMec).. With respect to regulation, inhibited by CST6. Functionally, cysteine protease. May have an important role in corneal physiology. This is Cathepsin L2 (CTSV) from Homo sapiens (Human).